The sequence spans 540 residues: uncharacterized protein (540 aa).

2 ABC transporter domains span residues 2–252 (IAVN…KLSQ) and 320–537 (LRVE…LTEL). Residue 34–41 (GANGAGKS) participates in ATP binding.

This sequence belongs to the ABC transporter superfamily.

This is an uncharacterized protein from Bacillus subtilis (strain 168).